Reading from the N-terminus, the 621-residue chain is Kelch-like protein 6 (621 aa).

The BTB domain maps to 72–139 (TDVILCVDIQ…TYTSKALITK (68 aa)). The region spanning 174 to 276 (CVGILRLADT…DPWYFVETVE (103 aa)) is the BACK domain. Kelch repeat units follow at residues 320–367 (VFMI…NKKW), 378–421 (EVYI…VLGG), 422–468 (KVYV…SHKK), 470–516 (LYVI…SFRD), 517–558 (RIYV…PCNN), and 560–606 (LYIT…TIRK).

As to expression, found in germinal center B-cells.

Its function is as follows. Involved in B-lymphocyte antigen receptor signaling and germinal center formation. In Homo sapiens (Human), this protein is Kelch-like protein 6 (KLHL6).